A 116-amino-acid chain; its full sequence is Small ribosomal subunit protein bS16 (116 aa).

The disordered stretch occupies residues 88–116 (RNNPKAAVPGKRMAELAKKKADRAAASAE). Positions 99-110 (RMAELAKKKADR) are enriched in basic and acidic residues.

The protein belongs to the bacterial ribosomal protein bS16 family.

The chain is Small ribosomal subunit protein bS16 from Cereibacter sphaeroides (strain ATCC 17029 / ATH 2.4.9) (Rhodobacter sphaeroides).